A 230-amino-acid polypeptide reads, in one-letter code: MKIAVIGAMEEEVELLRASLNNAQRTTIAGSEYTTGTYEGKEVVLLKSGIGKVNAAMSTTILLHEFKPDVVINTGSAGGYDEALEVGAVVISDEVRHHDVDVTIFGYEIGQMAGMPAAYKSDERLMKVAEEAVKAVGEHQYGIGLICSGDAFMNDPERVEAVRHHFPQMKAVEMEAAAVAQVCYQFATPFVVIRALSDIAGKESNISFDEFLPVAAKHSTQVVLKAIASL.

E12 serves as the catalytic Proton acceptor. Residues G78, M153, and M174 to E175 contribute to the substrate site. Catalysis depends on D198, which acts as the Proton donor.

The protein belongs to the PNP/UDP phosphorylase family. MtnN subfamily.

The catalysed reaction is S-adenosyl-L-homocysteine + H2O = S-(5-deoxy-D-ribos-5-yl)-L-homocysteine + adenine. It carries out the reaction S-methyl-5'-thioadenosine + H2O = 5-(methylsulfanyl)-D-ribose + adenine. The enzyme catalyses 5'-deoxyadenosine + H2O = 5-deoxy-D-ribose + adenine. It participates in amino-acid biosynthesis; L-methionine biosynthesis via salvage pathway; S-methyl-5-thio-alpha-D-ribose 1-phosphate from S-methyl-5'-thioadenosine (hydrolase route): step 1/2. Its function is as follows. Catalyzes the irreversible cleavage of the glycosidic bond in both 5'-methylthioadenosine (MTA) and S-adenosylhomocysteine (SAH/AdoHcy) to adenine and the corresponding thioribose, 5'-methylthioribose and S-ribosylhomocysteine, respectively. Also cleaves 5'-deoxyadenosine, a toxic by-product of radical S-adenosylmethionine (SAM) enzymes, into 5-deoxyribose and adenine. The chain is 5'-methylthioadenosine/S-adenosylhomocysteine nucleosidase from Lysinibacillus sphaericus (strain C3-41).